The sequence spans 269 residues: Protein tsct-1 (269 aa).

It belongs to the TSC-22/Dip/Bun family.

The chain is Protein tsct-1 from Caenorhabditis elegans.